The chain runs to 146 residues: DNA utilization protein HofO (146 aa).

A helical transmembrane segment spans residues Trp-20–His-37.

It localises to the cell inner membrane. In terms of biological role, required for the use of extracellular DNA as a nutrient. The chain is DNA utilization protein HofO (hofO) from Escherichia coli (strain K12).